The following is a 410-amino-acid chain: MDTNTLLLILANIIVIIGLARLIGLLFARFQQPPVIGEIIAGIMLGPSLLGLLSPALEKSFFPATTQPFLYLLSEIGLIFYMFLVGLELNPQYLRQKLKVAILTSNVSIFFPFVLGIVLSFFVLYSLNQPNKTSFIPFALFIGAAMSITAFPVLARILKDTGLDKTPLGTLGLTCASVDDISAWCLLAIAIAVTRTDNIFGAFPTLLGIIVYTVFMVTLGRKFFKYILRNYGQKNYLSQGLLTFIYIMVILSAMLTEWIGIDVIFGGFILGAILPKNTNLSTELATKTEDFVSTFLLPIFFAYSGLSTDLGLLNKPYLWAVCALVVAAAIAGKYCGVYVTTRALGVEKQEAKALGWLMNTRGLTELIILNVGLKLGVISPVIFTMFVIMAIITTIITSPLVVKIYPAPAH.

11 helical membrane-spanning segments follow: residues 7–27 (LLIL…GLLF), 33–53 (PPVI…LGLL), 69–89 (FLYL…GLEL), 107–127 (VSIF…LYSL), 135–155 (FIPF…PVLA), 173–193 (LTCA…AIAV), 199–219 (IFGA…MVTL), 241–261 (LLTF…WIGI), 291–311 (FVST…TDLG), 319–339 (WAVC…GVYV), and 376–396 (GVIS…TTII).

This sequence belongs to the monovalent cation:proton antiporter 2 (CPA2) transporter (TC 2.A.37) family.

The protein resides in the membrane. In terms of biological role, na(+)/H(+) antiporter. The sequence is that of Na(+)/H(+) antiporter NhaS4 (nhaS4) from Synechocystis sp. (strain ATCC 27184 / PCC 6803 / Kazusa).